The primary structure comprises 141 residues: Hemoglobin subunit alpha-2 (141 aa).

Position 1 is an N-acetylserine (S1). One can recognise a Globin domain in the interval 1–141 (SLSTKDKETV…LARALSEKYR (141 aa)). H59 serves as a coordination point for O2. A heme b-binding site is contributed by H88.

Belongs to the globin family. As to quaternary structure, hb2 is a heterotetramer of two alpha-2 chains and two beta chains. In terms of tissue distribution, red blood cells.

Functionally, involved in oxygen transport from gills to the various peripheral tissues. This chain is Hemoglobin subunit alpha-2 (hba2), found in Notothenia angustata (Rockcod).